The following is a 546-amino-acid chain: MQLPAMSCSPSQSSAAAAAAAYGCCQRILLASTSLPATGRPARLGLKLRSTHSLQIRNRRFVCQAMTETEPDGDGNGDEEKEELGDDASSPSVDSVTQENGSAESETNADNTKDETVNTEPLSSSDTVQNIDGDATPASDAQENVEVVDVAVGSPLPGMKQQLDESVRIPKATIDILKDQVFGFDTFFVTSQEPYEGGILFKGNLRGQPAKSYEKITNRLQNKFGDQYKLFLLINPEDDKPVAVVVPRQTLQPETTAVPEWFAAASFGVVTIFTLLLRNVPLLQDNLLSTFDNLELLKDGVYGALVTAAIIGVHEIAHILAARDTGIKLAVPYFVPSWQIGSFGAITRIVNIVRNREDLLKVAAAGPLAGFSLGFVLLLLGFILPPSDGLGLVIDPAVFHESFLVGGLAKLILGDALKEGTKLSINPLVLWAWAGLLINAINSIPAGELDGGRIAFAMWGRKISSRISSLAIGLLGISALFNDVAFYWVVLIFFLQRGPISPLSEEITEPENNYISIGVAILLFGLLVCLPYPFPFDPSQLTDFDL.

A chloroplast-targeting transit peptide spans 1-64 (MQLPAMSCSP…QIRNRRFVCQ (64 aa)). A disordered region spans residues 67–143 (TETEPDGDGN…DATPASDAQE (77 aa)). The segment covering 69 to 86 (TEPDGDGNGDEEKEELGD) has biased composition (acidic residues). Composition is skewed to polar residues over residues 89–110 (SSPSVDSVTQENGSAESETNAD) and 118–130 (NTEPLSSSDTVQN). Helical transmembrane passes span 257-277 (AVPEWFAAASFGVVTIFTLLL), 301-321 (VYGALVTAAIIGVHEIAHILA), 326-346 (GIKLAVPYFVPSWQIGSFGAI), 364-384 (AAGPLAGFSLGFVLLLLGFIL), 427-447 (PLVLWAWAGLLINAINSIPAG), 474-494 (LLGISALFNDVAFYWVVLIFF), and 514-534 (YISIGVAILLFGLLVCLPYPF).

This sequence belongs to the peptidase M50B family.

The protein resides in the plastid. Its subcellular location is the chloroplast membrane. In terms of biological role, probable membrane-associated metalloprotease that may be involved in chloroplast development. This chain is Probable zinc metalloprotease EGY2, chloroplastic (EGY2), found in Oryza sativa subsp. japonica (Rice).